We begin with the raw amino-acid sequence, 796 residues long: AUGMIN subunit 5 (796 aa).

The interval 79–120 (HGGSSNASIGSSVNPGKEESKSKGRRKDKTVTGESSSYAEDR) is disordered. Polar residues predominate over residues 80–92 (GGSSNASIGSSVN). Coiled coils occupy residues 115–191 (SYAE…EATR) and 462–501 (GKEREAAGLRASLNTLLSEIQRLNKLCAERKEAEDSLKKK).

It belongs to the HAUS5 family. As to quaternary structure, part of the augmin complex composed of 8 subunits. The complex acts on microtubules and interacts with gamma-tubulin in spindles and the phragmoplast.

Its subcellular location is the cytoplasm. It localises to the cytoskeleton. The protein resides in the spindle. The protein localises to the phragmoplast. Its function is as follows. Involved in microtubules reorganization during spindle and phragmoplast development. This Arabidopsis thaliana (Mouse-ear cress) protein is AUGMIN subunit 5.